The primary structure comprises 243 residues: Glutathione S-transferase U14 (243 aa).

The region spanning 5 to 87 is the GST N-terminal domain; sequence DTVKLIGCSD…YLDEAWPSDP (83 aa). Glutathione contacts are provided by residues 15 to 16, 44 to 45, 58 to 59, and 71 to 72; these read DP, EK, KT, and ES. The 128-residue stretch at 93 to 220 folds into the GST C-terminal domain; it reads NAYDRASARF…MPTVEEVTEL (128 aa). Thr-159 is modified (phosphothreonine).

The protein belongs to the GST superfamily. Tau family.

The protein localises to the cytoplasm. It localises to the cytosol. The enzyme catalyses RX + glutathione = an S-substituted glutathione + a halide anion + H(+). Its function is as follows. May be involved in the conjugation of reduced glutathione to a wide number of exogenous and endogenous hydrophobic electrophiles and have a detoxification role against certain herbicides. The chain is Glutathione S-transferase U14 (GSTU14) from Arabidopsis thaliana (Mouse-ear cress).